The primary structure comprises 359 residues: Fructose-bisphosphate aldolase class 2 (359 aa).

The residue at position 9 (K9) is an N6-acetyllysine. Residue S62 coordinates D-glyceraldehyde 3-phosphate. Residue D110 is the Proton donor of the active site. Zn(2+) contacts are provided by H111, D145, E175, and H227. Position 228 (G228) interacts with dihydroxyacetone phosphate. H265 provides a ligand contact to Zn(2+). Dihydroxyacetone phosphate-binding positions include 266–268 and 287–290; these read GGS and NIDT.

The protein belongs to the class II fructose-bisphosphate aldolase family. Homodimer. Zn(2+) serves as cofactor.

The catalysed reaction is beta-D-fructose 1,6-bisphosphate = D-glyceraldehyde 3-phosphate + dihydroxyacetone phosphate. The protein operates within carbohydrate degradation; glycolysis; D-glyceraldehyde 3-phosphate and glycerone phosphate from D-glucose: step 4/4. Its function is as follows. Catalyzes the aldol condensation of dihydroxyacetone phosphate (DHAP or glycerone-phosphate) with glyceraldehyde 3-phosphate (G3P) to form fructose 1,6-bisphosphate (FBP) in gluconeogenesis and the reverse reaction in glycolysis. The chain is Fructose-bisphosphate aldolase class 2 (fbaA) from Escherichia coli O157:H7.